The primary structure comprises 211 residues: Outer-membrane lipoprotein carrier protein (211 aa).

Residues 1 to 25 form the signal peptide; the sequence is MRAIRMLLVSALTLGSLSATLSAHA.

Belongs to the LolA family. Monomer.

The protein resides in the periplasm. Functionally, participates in the translocation of lipoproteins from the inner membrane to the outer membrane. Only forms a complex with a lipoprotein if the residue after the N-terminal Cys is not an aspartate (The Asp acts as a targeting signal to indicate that the lipoprotein should stay in the inner membrane). This Pseudomonas putida (strain W619) protein is Outer-membrane lipoprotein carrier protein.